Reading from the N-terminus, the 85-residue chain is Cell division topological specificity factor (85 aa).

The protein belongs to the MinE family.

Prevents the cell division inhibition by proteins MinC and MinD at internal division sites while permitting inhibition at polar sites. This ensures cell division at the proper site by restricting the formation of a division septum at the midpoint of the long axis of the cell. This chain is Cell division topological specificity factor, found in Chromobacterium violaceum (strain ATCC 12472 / DSM 30191 / JCM 1249 / CCUG 213 / NBRC 12614 / NCIMB 9131 / NCTC 9757 / MK).